The sequence spans 224 residues: Peroxiredoxin-6 (224 aa).

Residues 5 to 169 (LLLGDEAPNF…ILRVIISLQL (165 aa)) form the Thioredoxin domain. Positions 31–40 (DSWGILFSHP) are required and sufficient for targeting to lysosomes and lamellar bodies. At Thr-44 the chain carries Phosphothreonine. Residue Cys-47 is the Cysteine sulfenic acid (-SOH) intermediate; for peroxidase activity of the active site. An N6-acetyllysine modification is found at Lys-63. The residue at position 89 (Tyr-89) is a Phosphotyrosine. Asp-140 functions as the For phospholipase activity in the catalytic mechanism. Residue Thr-177 is modified to Phosphothreonine; by MAPK. Lys-209 carries the N6-acetyllysine; alternate modification. At Lys-209 the chain carries N6-succinyllysine; alternate.

The protein belongs to the peroxiredoxin family. Prx6 subfamily. In terms of assembly, homodimer. Interacts with GSTP1; mediates PRDX6 glutathionylation and regeneration. Interacts with APEX1. Interacts with STH. May interact with FAM168B. May interact with HTR2A. The cofactor is Does not need Ca(2+) as cofactor.. Irreversibly inactivated by overoxidation of Cys-47 to sulfinic acid (Cys-SO(2)H) and sulfonic acid (Cys-SO(3)H) forms upon oxidative stress. Post-translationally, phosphorylation at Thr-177 by MAP kinases increases the phospholipase activity of the enzyme. The phosphorylated form exhibits a greater lysophosphatidylcholine acyltransferase activity compared to the non-phosphorylated form.

The protein localises to the cytoplasm. It is found in the lysosome. It catalyses the reaction a hydroperoxide + 2 glutathione = an alcohol + glutathione disulfide + H2O. The enzyme catalyses a 1,2-diacyl-sn-glycero-3-phosphocholine + H2O = a 1-acyl-sn-glycero-3-phosphocholine + a fatty acid + H(+). It carries out the reaction a 1-acyl-sn-glycero-3-phosphocholine + an acyl-CoA = a 1,2-diacyl-sn-glycero-3-phosphocholine + CoA. The catalysed reaction is 1-hexadecanoyl-sn-glycero-3-phosphocholine + hexadecanoyl-CoA = 1,2-dihexadecanoyl-sn-glycero-3-phosphocholine + CoA. It catalyses the reaction 1,2-dihexadecanoyl-sn-glycero-3-phosphocholine + H2O = 1-hexadecanoyl-sn-glycero-3-phosphocholine + hexadecanoate + H(+). Functionally, thiol-specific peroxidase that catalyzes the reduction of hydrogen peroxide and organic hydroperoxides to water and alcohols, respectively. Can reduce H(2)O(2) and short chain organic, fatty acid, and phospholipid hydroperoxides. Also has phospholipase activity, and can therefore either reduce the oxidized sn-2 fatty acyl group of phospholipids (peroxidase activity) or hydrolyze the sn-2 ester bond of phospholipids (phospholipase activity). These activities are dependent on binding to phospholipids at acidic pH and to oxidized phospholipds at cytosolic pH. Plays a role in cell protection against oxidative stress by detoxifying peroxides and in phospholipid homeostasis. Exhibits acyl-CoA-dependent lysophospholipid acyltransferase which mediates the conversion of lysophosphatidylcholine (1-acyl-sn-glycero-3-phosphocholine or LPC) into phosphatidylcholine (1,2-diacyl-sn-glycero-3-phosphocholine or PC). Shows a clear preference for LPC as the lysophospholipid and for palmitoyl CoA as the fatty acyl substrate. In Bos taurus (Bovine), this protein is Peroxiredoxin-6 (PRDX6).